A 143-amino-acid chain; its full sequence is Large ribosomal subunit protein uL11 (143 aa).

The protein belongs to the universal ribosomal protein uL11 family. Part of the ribosomal stalk of the 50S ribosomal subunit. Interacts with L10 and the large rRNA to form the base of the stalk. L10 forms an elongated spine to which L12 dimers bind in a sequential fashion forming a multimeric L10(L12)X complex. One or more lysine residues are methylated.

Forms part of the ribosomal stalk which helps the ribosome interact with GTP-bound translation factors. This is Large ribosomal subunit protein uL11 from Erythrobacter litoralis (strain HTCC2594).